Consider the following 118-residue polypeptide: UPF0102 protein Sde_3146 (118 aa).

It belongs to the UPF0102 family.

This chain is UPF0102 protein Sde_3146, found in Saccharophagus degradans (strain 2-40 / ATCC 43961 / DSM 17024).